We begin with the raw amino-acid sequence, 261 residues long: VPGGLXPPPEYVGPKLVNDADHPWEPLRPGDIRGPCPGLNTLASHGYLPRNGVATPAQIINAIVEGFNFNYEGAVFVTYFAHIVDGNLVTDLLSIGGKTNLTGEDTGAPAIIGGLNTHSVFEGDASMTRDDFHFGDNHSFNQTLFDQFVEYSNTYGGGFYNQEVAGHLRRRRIEQSIATNPEFDFTSPRFFTAFAESSFPYSFFVDGRITERPGGLSMENATLFFRDHKMPDDFWRNVNGEMTFTGTPDPNSAPSNLALGH.

Cys36 contacts heme. Asn100, Asn137, Asn141, and Asn220 each carry an N-linked (GlcNAc...) asparagine glycan.

Belongs to the chloroperoxidase family. Heme b serves as cofactor. Post-translationally, N-glycosylated.

Functionally, aromatic peroxidase that oxidizes aryl alcohols into the corresponding aldehydes and then into the corresponding benzoic acids. Catalyzes the regioselective peroxide-dependent hydroxylation of naphthalene to 1-naphthol and to a far lesser extent 2-naphthol via a naphthalene 1,2-oxide intermediate. Halogenates phenol to 2-bromophenol and 4-bromophenol. Oxidizes the sulfur-containing heterocycle dibenzothiophene to yield sulfoxidation products, and trace amounts of ring-hydroxylation products. The chain is Aromatic peroxygenase from Coprinellus radians (Coprophilous mushroom).